We begin with the raw amino-acid sequence, 347 residues long: Eukaryotic translation initiation factor 3 subunit I (347 aa).

WD repeat units lie at residues 8–47 (GHER…RLGT), 50–89 (DHSG…AVHS), 150–190 (EQAT…VQAK), 192–233 (IHEK…KTYK), and 289–328 (GHFG…FDFK).

This sequence belongs to the eIF-3 subunit I family. In terms of assembly, component of the eukaryotic translation initiation factor 3 (eIF-3) complex.

It is found in the cytoplasm. Its function is as follows. Component of the eukaryotic translation initiation factor 3 (eIF-3) complex, which is involved in protein synthesis of a specialized repertoire of mRNAs and, together with other initiation factors, stimulates binding of mRNA and methionyl-tRNAi to the 40S ribosome. The eIF-3 complex specifically targets and initiates translation of a subset of mRNAs involved in cell proliferation. The sequence is that of Eukaryotic translation initiation factor 3 subunit I from Kluyveromyces lactis (strain ATCC 8585 / CBS 2359 / DSM 70799 / NBRC 1267 / NRRL Y-1140 / WM37) (Yeast).